Here is a 135-residue protein sequence, read N- to C-terminus: Crustacean hyperglycemic hormones A* (135 aa).

The signal sequence occupies residues M1–G26. Q62 carries the pyrrolidone carboxylic acid modification. 3 cysteine pairs are disulfide-bonded: C68–C104, C84–C100, and C87–C113. V133 carries the valine amide modification.

This sequence belongs to the arthropod CHH/MIH/GIH/VIH hormone family. Produced by the medulla terminalis X-organ in the eyestalks and transported to the sinus gland where they are stored and released.

The protein resides in the secreted. Functionally, hormone found in the sinus gland of isopods and decapods which controls the blood sugar level. Has a secretagogue action over the amylase released from the midgut gland. May act as a stress hormone and may be involved in the control of molting and reproduction. The chain is Crustacean hyperglycemic hormones A* (CHHA*) from Faxonius limosus (Spinycheek crayfish).